The primary structure comprises 1491 residues: Copper-transporting ATPase 1 (1491 aa).

Over M1–S644 the chain is Cytoplasmic. 2 consecutive HMA domains span residues N8–L74 and T85–G151. Cu(+)-binding residues include T18, C19, and C22. Phosphothreonine is present on T152. The region spanning V171–F237 is the HMA 3 domain. Cu(+)-binding residues include C182 and C185. S270 carries the phosphoserine modification. The HMA 4 domain occupies S277–Y343. Residues C288 and C291 each contribute to the Cu(+) site. Phosphothreonine is present on T327. Phosphoserine occurs at positions 339, 353, 357, and 362. HMA domains follow at residues Q377–A443, N479–M545, and G555–S621. Positions 388, 391, 490, 493, 566, and 569 each coordinate Cu(+). The chain crosses the membrane as a helical span at residues F645–D666. Residues H667–L705 are Extracellular-facing. N677 carries an N-linked (GlcNAc...) asparagine glycan. The helical transmembrane segment at L706–Q725 threads the bilayer. The Cytoplasmic portion of the chain corresponds to A726 to H732. The chain crosses the membrane as a helical span at residues K733–L753. At V754–F772 the chain is on the extracellular side. The chain crosses the membrane as a helical span at residues D773–K793. Residues G794 to D926 lie on the Cytoplasmic side of the membrane. The chain crosses the membrane as a helical span at residues K927–I950. At G951 to F980 the chain is on the extracellular side. The N-linked (GlcNAc...) asparagine glycan is linked to N966. The chain crosses the membrane as a helical span at residues Q981–A1002. Topologically, residues V1003–R1347 are cytoplasmic. The active-site 4-aspartylphosphate intermediate is the D1035. ATP is bound at residue E1072. T1203 carries the post-translational modification Phosphothreonine. D1292 and D1296 together coordinate Mg(2+). A helical membrane pass occupies residues I1348–A1365. Residues G1366–Q1376 lie on the Extracellular side of the membrane. The helical transmembrane segment at P1377–L1396 threads the bilayer. Residues F1397–L1491 are Cytoplasmic-facing. Residues S1421, S1423, S1451, S1454, and S1457 each carry the phosphoserine modification. Residues L1458–L1459 carry the Endocytosis signal motif. Phosphoserine is present on residues S1460, S1464, S1467, and S1477. The segment at S1477–L1491 is PDZD11-binding. An Endocytosis signal motif is present at residues L1478–L1479.

This sequence belongs to the cation transport ATPase (P-type) (TC 3.A.3) family. Type IB subfamily. In terms of assembly, monomer. Interacts with PDZD11. Interacts with ATOX1 and COMMD1. Interacts with TYRP1. Directly interacts with SOD3; this interaction is copper-dependent and is required for SOD3 activity. Widely expressed. Highly expressed in pituitary endocrine cells. Expressed in melanocytes (at protein level). Expressed in motor neuron (at protein level). Expressed in hippocampal neuron (at protein level). In the kidney, it is detected in the proximal and distal tubules (at protein level). Expressed in aorta (at protein level).

The protein resides in the golgi apparatus. It localises to the trans-Golgi network membrane. It is found in the cell membrane. Its subcellular location is the melanosome membrane. The protein localises to the early endosome membrane. The protein resides in the cell projection. It localises to the axon. It is found in the dendrite. Its subcellular location is the postsynaptic density. The enzyme catalyses Cu(+)(in) + ATP + H2O = Cu(+)(out) + ADP + phosphate + H(+). In terms of biological role, ATP-driven copper (Cu(+)) ion pump that plays an important role in intracellular copper ion homeostasis. Within a catalytic cycle, acquires Cu(+) ion from donor protein on the cytoplasmic side of the membrane and delivers it to acceptor protein on the lumenal side. The transfer of Cu(+) ion across the membrane is coupled to ATP hydrolysis and is associated with a transient phosphorylation that shifts the pump conformation from inward-facing to outward-facing state. Under physiological conditions, at low cytosolic copper concentration, it is localized at the trans-Golgi network (TGN) where it transfers Cu(+) ions to cuproenzymes of the secretory pathway. Upon elevated cytosolic copper concentrations, it relocalizes to the plasma membrane where it is responsible for the export of excess Cu(+) ions. May play a dual role in neuron function and survival by regulating cooper efflux and neuronal transmission at the synapse as well as by supplying Cu(+) ions to enzymes such as PAM, TYR and SOD3. In the melanosomes of pigmented cells, provides copper cofactor to TYR to form an active TYR holoenzyme for melanin biosynthesis. This Mus musculus (Mouse) protein is Copper-transporting ATPase 1.